A 283-amino-acid chain; its full sequence is Spore coat polysaccharide biosynthesis protein SpsK (283 aa).

It belongs to the dTDP-4-dehydrorhamnose reductase family.

The protein operates within spore coat biogenesis; spore coat polysaccharide biosynthesis. In Bacillus subtilis (strain 168), this protein is Spore coat polysaccharide biosynthesis protein SpsK (spsK).